A 203-amino-acid chain; its full sequence is N-(5'-phosphoribosyl)anthranilate isomerase (203 aa).

The protein belongs to the TrpF family.

The enzyme catalyses N-(5-phospho-beta-D-ribosyl)anthranilate = 1-(2-carboxyphenylamino)-1-deoxy-D-ribulose 5-phosphate. Its pathway is amino-acid biosynthesis; L-tryptophan biosynthesis; L-tryptophan from chorismate: step 3/5. The sequence is that of N-(5'-phosphoribosyl)anthranilate isomerase from Geotalea uraniireducens (strain Rf4) (Geobacter uraniireducens).